Reading from the N-terminus, the 229-residue chain is NAD-dependent protein deacetylase (229 aa).

Positions 1-229 (MNKLNEALKK…SDAVKVFAEI (229 aa)) constitute a Deacetylase sirtuin-type domain. Residues alanine 20, arginine 32, glutamine 96, isoleucine 98, aspartate 99, histidine 114, threonine 181, serine 182, asparagine 205, and valine 223 each coordinate NAD(+). Positions 98 and 99 each coordinate nicotinamide. Residue histidine 114 is the Proton acceptor of the active site.

This sequence belongs to the sirtuin family. Class U subfamily.

Its subcellular location is the cytoplasm. The catalysed reaction is N(6)-acetyl-L-lysyl-[protein] + NAD(+) + H2O = 2''-O-acetyl-ADP-D-ribose + nicotinamide + L-lysyl-[protein]. Its function is as follows. NAD-dependent protein deacetylase which modulates the activities of several enzymes which are inactive in their acetylated form. The protein is NAD-dependent protein deacetylase of Listeria monocytogenes serotype 4b (strain F2365).